Consider the following 67-residue polypeptide: Large ribosomal subunit protein bL35 (67 aa).

The protein belongs to the bacterial ribosomal protein bL35 family.

In Caldanaerobacter subterraneus subsp. tengcongensis (strain DSM 15242 / JCM 11007 / NBRC 100824 / MB4) (Thermoanaerobacter tengcongensis), this protein is Large ribosomal subunit protein bL35.